The sequence spans 456 residues: MIQRHLGQPRLIQNGGDAGGVKAVAQKQTQRRLDQIFPAGRGSHANLHSIPTGYACIIAALTENSQRRHCFAARPSLCVAVMDDSKTNLIGLSRDQLIAEMASIGEKPFRAKQLWHWMYNRGETDFAKMTSISKSMHGALAERYVVRRPGVTKELISADTTRKWLLKFDDGHEAETVYIPDADEERGAVCISTQVGCTLTCRFCHTGTQLLVRNLSAAEIVGQFMVARDSYGEWPTPDDGGRQLSNIVVMGMGEPLYNFENVATALEIAMDGEGIGISKRRITLSTSGVVPMMKECGERLGVNLAVSLHAVTDEIRDRIMPINKKYPLKELMQACREYPGASNARRITFEYIMLKGINDSAADARALLKLVKGLPAKFNLIPFNPWPGSEFDTPDIKTTKAFSDILQDAGYSAPIRMPRGRDILAACGQLRSESQRERASLAKARAAAGIADEHHG.

The interval 1–21 (MIQRHLGQPRLIQNGGDAGGV) is disordered. Residue E175 is the Proton acceptor of the active site. The region spanning 183–416 (DEERGAVCIS…QDAGYSAPIR (234 aa)) is the Radical SAM core domain. An intrachain disulfide couples C190 to C427. 3 residues coordinate [4Fe-4S] cluster: C197, C201, and C204. Residues 253 to 254 (GE), S285, 307 to 309 (SLH), and N384 contribute to the S-adenosyl-L-methionine site. Residue C427 is the S-methylcysteine intermediate of the active site.

This sequence belongs to the radical SAM superfamily. RlmN family. The cofactor is [4Fe-4S] cluster.

The protein localises to the cytoplasm. The catalysed reaction is adenosine(2503) in 23S rRNA + 2 reduced [2Fe-2S]-[ferredoxin] + 2 S-adenosyl-L-methionine = 2-methyladenosine(2503) in 23S rRNA + 5'-deoxyadenosine + L-methionine + 2 oxidized [2Fe-2S]-[ferredoxin] + S-adenosyl-L-homocysteine. The enzyme catalyses adenosine(37) in tRNA + 2 reduced [2Fe-2S]-[ferredoxin] + 2 S-adenosyl-L-methionine = 2-methyladenosine(37) in tRNA + 5'-deoxyadenosine + L-methionine + 2 oxidized [2Fe-2S]-[ferredoxin] + S-adenosyl-L-homocysteine. In terms of biological role, specifically methylates position 2 of adenine 2503 in 23S rRNA and position 2 of adenine 37 in tRNAs. m2A2503 modification seems to play a crucial role in the proofreading step occurring at the peptidyl transferase center and thus would serve to optimize ribosomal fidelity. The chain is Dual-specificity RNA methyltransferase RlmN from Paramagnetospirillum magneticum (strain ATCC 700264 / AMB-1) (Magnetospirillum magneticum).